The following is a 627-amino-acid chain: Phosphomethylpyrimidine synthase (627 aa).

Polar residues predominate over residues 1–24 (MSATQKNNITRLEQLDRQSTQPFP). The segment at 1 to 29 (MSATQKNNITRLEQLDRQSTQPFPNSRKV) is disordered. Residues Asn-231, Met-260, Tyr-289, His-325, 345–347 (SRG), 386–389 (DGLR), and Glu-425 each bind substrate. His-429 contacts Zn(2+). Tyr-452 serves as a coordination point for substrate. A Zn(2+)-binding site is contributed by His-493. Cys-573, Cys-576, and Cys-581 together coordinate [4Fe-4S] cluster.

It belongs to the ThiC family. In terms of assembly, homodimer. Requires [4Fe-4S] cluster as cofactor.

It carries out the reaction 5-amino-1-(5-phospho-beta-D-ribosyl)imidazole + S-adenosyl-L-methionine = 4-amino-2-methyl-5-(phosphooxymethyl)pyrimidine + CO + 5'-deoxyadenosine + formate + L-methionine + 3 H(+). The protein operates within cofactor biosynthesis; thiamine diphosphate biosynthesis. Functionally, catalyzes the synthesis of the hydroxymethylpyrimidine phosphate (HMP-P) moiety of thiamine from aminoimidazole ribotide (AIR) in a radical S-adenosyl-L-methionine (SAM)-dependent reaction. The protein is Phosphomethylpyrimidine synthase of Pseudomonas aeruginosa (strain UCBPP-PA14).